An 863-amino-acid chain; its full sequence is MSGEQQLDADLGSGVEVEEFSWEDYLEETGSTTVPYASFKHVDIRLQNGFAPGMKLEVALKNDPETYWVATIITACEQLLLLRYEGYGEDRKADFWCDIRKAGLYPIGWCQQNKKTLEAPEGIRDKVSDWNAFLQQTLIGACGPPVSLLEGLRNGRNPLDLIAPGSKLECQDFRDSLSTWLVTVVENIGGRLKLRYEGLESRDGFEHWLYYLDPFLHHIGWAAQQGCDLQPPLAIKHLKSEADWQEILAKVKEEEPLPSYLFKDKQVIGTHEFSINMKLEAVDPWSPFGISPATIAKVFDDKYFLVEMDDLRPEDHTRRSFVCHANSPGIFPVQWSLKNGLHINPPPGFRSQDFDWADYLKQCGAEAAPQKCFPQSISEHQFKENMKLEAVNPLFPEEVCIATVTAVRGSYLWLQLEGSKKPVPEFIVSAESMNIFPLGWCETNGHPLSTPRRARGHKLRKIAVVQPEKQILSSRTVHEGLKNQLNSTHSVMINGKYCCPKIYFNHRCFSGPYLNKGRIAELPQCVGPGNCVLVLREVLTLLINAAYKPSRVLRELQLDKDSVWHGCGEVLKAKYKGKSYRATVEIVRTADRVTEFCRQTCIKLECCPNLFGPRMVLDTCSENCSVLTKTKYTHYYGKKKNKRIGRPPGGHSNLSCALKKSSKRRKRRKNIFVHKKKRSSASVDNTPVGSPQGSGGEDEEDADDGDEDSLTEGSTSEQQEELQEESEVSEKKSSSSSPTQSETPTPLPPDTQTNKRDAQTSSVSDDENKPPSPKEIRIEVDERLHLDSNPLKWSVADVVRFIRSTDCAPLARIFLDQEIDGQALLLLTLPTVQECMDLKLGPAIKLCHHIERIKFAFYEQFAN.

MBT repeat units follow at residues 20–120 (FSWE…LEAP), 128–232 (SDWN…LQPP), 242–346 (ADWQ…INPP), and 354–451 (FDWA…LSTP). Residues 638 to 773 (KKKNKRIGRP…SDDENKPPSP (136 aa)) form a disordered region. Over residues 660 to 679 (KSSKRRKRRKNIFVHKKKRS) the composition is skewed to basic residues. Residues 680-691 (SASVDNTPVGSP) are compositionally biased toward polar residues. 2 stretches are compositionally biased toward acidic residues: residues 696–710 (GEDEEDADDGDEDSL) and 718–727 (QQEELQEESE). A compositionally biased stretch (low complexity) spans 734-744 (SSSSPTQSETP). Residues S764 and S772 each carry the phosphoserine modification. One can recognise an SAM domain in the interval 793 to 861 (WSVADVVRFI…RIKFAFYEQF (69 aa)).

Interacts with MYOD1. Component of the SLC (SFMBT1-LSD1-CoREST) corepressor complex, which also contains KDM1A/LSD1 and RCOR1/CoREST. Interacts with KDM1A/LSD1 and RCOR1/CoREST. Interacts with MYOD1. Interacts with L3MBTL3. Highly expressed in the testis, low expression is detected in brain, kidney, heart and lung. Highly expressed in germ cells, where it associates with the synaptic regions of meiotic chromosomes in pachytene stage spermatocytes.

It is found in the nucleus. In terms of biological role, histone-binding protein, which is part of various corepressor complexes. Mediates the recruitment of corepressor complexes to target genes, followed by chromatin compaction and repression of transcription. Plays a role during myogenesis: required for the maintenance of undifferentiated states of myogenic progenitor cells via interaction with MYOD1. Interaction with MYOD1 leads to the recruitment of associated corepressors and silencing of MYOD1 target genes. Part of the SLC complex in germ cells, where it may play a role during spermatogenesis. This Mus musculus (Mouse) protein is Scm-like with four MBT domains protein 1 (Sfmbt1).